Here is a 464-residue protein sequence, read N- to C-terminus: Fumarate hydratase class II (464 aa).

Residues 97–99 (SGT), 128–131 (HPND), 138–140 (SSN), and threonine 186 each bind substrate. The active-site Proton donor/acceptor is the histidine 187. Residue serine 317 is part of the active site. Substrate is bound by residues serine 318 and 323-325 (KVN).

It belongs to the class-II fumarase/aspartase family. Fumarase subfamily. As to quaternary structure, homotetramer.

The protein resides in the cytoplasm. It carries out the reaction (S)-malate = fumarate + H2O. The protein operates within carbohydrate metabolism; tricarboxylic acid cycle; (S)-malate from fumarate: step 1/1. Involved in the TCA cycle. Catalyzes the stereospecific interconversion of fumarate to L-malate. The polypeptide is Fumarate hydratase class II (Leptospira interrogans serogroup Icterohaemorrhagiae serovar copenhageni (strain Fiocruz L1-130)).